The following is a 305-amino-acid chain: Acyl transferase (305 aa).

Residues Ser114, Asp211, and His241 each act as charge relay system in the active site.

Belongs to the LuxD family.

The protein operates within lipid metabolism; fatty acid reduction for biolumincescence. Functionally, acyl transferase is part of the fatty acid reductase system required for aldehyde biosynthesis; it produces fatty acids for the luminescent reaction. This Vibrio campbellii (strain ATCC BAA-1116) protein is Acyl transferase.